Reading from the N-terminus, the 115-residue chain is Large ribosomal subunit protein bL19 (115 aa).

This sequence belongs to the bacterial ribosomal protein bL19 family.

Functionally, this protein is located at the 30S-50S ribosomal subunit interface and may play a role in the structure and function of the aminoacyl-tRNA binding site. This is Large ribosomal subunit protein bL19 from Desulforudis audaxviator (strain MP104C).